Here is a 181-residue protein sequence, read N- to C-terminus: Alkyl hydroperoxide reductase AhpD (181 aa).

C131 (proton donor) is an active-site residue. Residues C131 and C134 are joined by a disulfide bond. C134 acts as the Cysteine sulfenic acid (-SOH) intermediate in catalysis.

It belongs to the AhpD family.

The catalysed reaction is N(6)-[(R)-dihydrolipoyl]-L-lysyl-[lipoyl-carrier protein] + a hydroperoxide = N(6)-[(R)-lipoyl]-L-lysyl-[lipoyl-carrier protein] + an alcohol + H2O. Its function is as follows. Antioxidant protein with alkyl hydroperoxidase activity. Required for the reduction of the AhpC active site cysteine residues and for the regeneration of the AhpC enzyme activity. This chain is Alkyl hydroperoxide reductase AhpD, found in Bradyrhizobium sp. (strain BTAi1 / ATCC BAA-1182).